The chain runs to 34 residues: MSDIN-like toxin proprotein 4 (34 aa).

Residues 1 to 10 constitute a propeptide that is removed on maturation; it reads MSDINTARLP. The cyclopeptide (Leu-Pro) cross-link spans 11–20; that stretch reads LFLPPVRMPP. The propeptide occupies 21–34; sequence CVGDDIEMVLTRGE.

This sequence belongs to the MSDIN fungal toxin family. Post-translationally, processed by the macrocyclase-peptidase enzyme POPB to yield a toxic cyclic decapeptide. POPB first removes 10 residues from the N-terminus. Conformational trapping of the remaining peptide forces the enzyme to release this intermediate rather than proceed to macrocyclization. The enzyme rebinds the remaining peptide in a different conformation and catalyzes macrocyclization of the N-terminal 10 residues.

Its function is as follows. Probable toxin that belongs to the MSDIN-like toxin family responsible for a large number of food poisoning cases and deaths. This is MSDIN-like toxin proprotein 4 from Amanita bisporigera (Destroying angel).